The primary structure comprises 241 residues: Anti-Pycsar protein Apyc1 (241 aa).

The segment at 17-215 (DNNNALLEQD…SVQKKTWLMH (199 aa)) is beta-lactamase-like. The Zn(2+) site is built by His59, His61, Asp63, His64, His142, Asp162, and His215.

It belongs to the nuclease anti-Pycsar protein Apyc1 family. In terms of assembly, homodimer. The cofactor is Zn(2+).

It carries out the reaction 3',5'-cyclic CMP + H2O = CMP + H(+). The enzyme catalyses 3',5'-cyclic UMP + H2O = UMP + H(+). Functionally, counteracts the endogenous Pycsar antiviral defense system. Phosphodiesterase that enables metal-dependent hydrolysis of host cyclic nucleotide Pycsar defense signals such as cCMP and cUMP. This chain is Anti-Pycsar protein Apyc1, found in Paenibacillus harenae.